Here is a 44-residue protein sequence, read N- to C-terminus: Thymosin beta-4, Y-chromosomal (44 aa).

Residues Met-1 to Ser-44 are disordered. 2 stretches are compositionally biased toward basic and acidic residues: residues Glu-9–Glu-25 and Glu-33–Ser-44.

Belongs to the thymosin beta family. As to expression, ubiquitous.

It is found in the cytoplasm. The protein resides in the cytoskeleton. Its function is as follows. Plays an important role in the organization of the cytoskeleton. Binds to and sequesters actin monomers (G actin) and therefore inhibits actin polymerization. This Homo sapiens (Human) protein is Thymosin beta-4, Y-chromosomal (TMSB4Y).